We begin with the raw amino-acid sequence, 317 residues long: Urease accessory protein 6 (317 aa).

This sequence belongs to the UreF family. In terms of assembly, URE4, URE6 and URE7 may form a complex that acts as a GTP-hydrolysis-dependent molecular chaperone, activating the urease apoprotein URE1.

In terms of biological role, urease accessory protein required for the maturation and activation of urease via the functional incorporation of the urease nickel metallocenter. Plays a role in host brain invasion. In Cryptococcus neoformans var. grubii serotype A (strain H99 / ATCC 208821 / CBS 10515 / FGSC 9487) (Filobasidiella neoformans var. grubii), this protein is Urease accessory protein 6.